Reading from the N-terminus, the 404-residue chain is Intracellular hyaluronan-binding protein 4.L (404 aa).

3 disordered regions span residues 1–21 (MRLD…MQDN), 51–288 (LTRR…QEMS), and 359–379 (LTRP…REEA). The span at 8 to 19 (ETPSSPVNTEMQ) shows a compositional bias: polar residues. Composition is skewed to basic and acidic residues over residues 71 to 81 (GKKESQKDRKA), 145 to 159 (KVDR…REVR), and 165 to 184 (RSNE…DKQM). Residues 188–200 (GGRGGMRGRGRGG) are compositionally biased toward gly residues. Basic and acidic residues-rich tracts occupy residues 205–233 (TEND…DKRG) and 270–281 (EEHAKVPEEKNE).

Belongs to the SERBP1-HABP4 family. Associates with ribosomes; promoting ribosome stabilization. Interacts with eef2/eEF2; promoting ribosome stabilization.

The protein resides in the nucleus. It localises to the cytoplasm. It is found in the stress granule. Its subcellular location is the nucleolus. The protein localises to the nucleus speckle. The protein resides in the cajal body. Functionally, ribosome-binding protein that promotes ribosome hibernation, a process during which ribosomes are stabilized in an inactive state and preserved from proteasomal degradation. Acts via its association with eef2/eEF2 factor at the A-site of the ribosome, promoting ribosome stabilization in an inactive state compatible with storage. Plays a key role in ribosome hibernation in the mature egg by promoting ribosome stabilization. Ribosomes, which are produced in large quantities during oogenesis, are stored and translationally repressed in the egg and early embryo. The chain is Intracellular hyaluronan-binding protein 4.L from Xenopus laevis (African clawed frog).